Here is a 688-residue protein sequence, read N- to C-terminus: MIOREX complex component 1 (688 aa).

The tract at residues Met1–Gln24 is disordered. Residues Met1–Ile46 constitute a mitochondrion transit peptide.

As to quaternary structure, associates with the mitochondrial ribosome.

The protein resides in the mitochondrion. Its function is as follows. Component of MIOREX complexes, large expressome-like assemblies of ribosomes with factors involved in all the steps of post-transcriptional gene expression. The protein is MIOREX complex component 1 of Saccharomyces cerevisiae (strain ATCC 204508 / S288c) (Baker's yeast).